Reading from the N-terminus, the 500-residue chain is L-arabinose isomerase (500 aa).

Residues E306, E333, H350, and H450 each contribute to the Mn(2+) site.

This sequence belongs to the arabinose isomerase family. Homohexamer. It depends on Mn(2+) as a cofactor.

It catalyses the reaction beta-L-arabinopyranose = L-ribulose. Its pathway is carbohydrate degradation; L-arabinose degradation via L-ribulose; D-xylulose 5-phosphate from L-arabinose (bacterial route): step 1/3. In terms of biological role, catalyzes the conversion of L-arabinose to L-ribulose. The sequence is that of L-arabinose isomerase from Escherichia coli O139:H28 (strain E24377A / ETEC).